A 147-amino-acid chain; its full sequence is 3-dehydroquinate dehydratase (147 aa).

The active-site Proton acceptor is Y24. Substrate is bound by residues N75, H81, and D88. H101 serves as the catalytic Proton donor. Substrate is bound by residues 102-103 (LS) and R112.

The protein belongs to the type-II 3-dehydroquinase family. In terms of assembly, homododecamer.

The enzyme catalyses 3-dehydroquinate = 3-dehydroshikimate + H2O. Its pathway is metabolic intermediate biosynthesis; chorismate biosynthesis; chorismate from D-erythrose 4-phosphate and phosphoenolpyruvate: step 3/7. Catalyzes a trans-dehydration via an enolate intermediate. This is 3-dehydroquinate dehydratase from Caulobacter sp. (strain K31).